The following is a 319-amino-acid chain: Tyrosine phosphatase-like protein N3 (319 aa).

The 279-residue stretch at 7 to 285 folds into the Tyrosine-protein phosphatase domain; it reads SNLSIHEFWR…LIINKILLHS (279 aa).

It belongs to the protein-tyrosine phosphatase family.

The sequence is that of Tyrosine phosphatase-like protein N3 (N7) from Microplitis demolitor bracovirus (isolate Webb) (MdBV).